The sequence spans 131 residues: Global transcriptional regulator Spx (131 aa).

A disulfide bridge links Cys10 with Cys13.

This sequence belongs to the ArsC family. Spx subfamily. In terms of assembly, interacts with the C-terminal domain of the alpha subunit of the RNAP.

The protein resides in the cytoplasm. Global transcriptional regulator that plays a key role in stress response and exerts either positive or negative regulation of genes. Acts by interacting with the C-terminal domain of the alpha subunit of the RNA polymerase (RNAP). This interaction can enhance binding of RNAP to the promoter region of target genes and stimulate their transcription, or block interaction of RNAP with activator. In Staphylococcus epidermidis (strain ATCC 35984 / DSM 28319 / BCRC 17069 / CCUG 31568 / BM 3577 / RP62A), this protein is Global transcriptional regulator Spx.